A 200-amino-acid polypeptide reads, in one-letter code: Cation channel sperm-associated auxiliary subunit zeta (200 aa).

Residues 1–29 (MEEKPSKVSLKSSDRQGSDEESVHSDTRD) are compositionally biased toward basic and acidic residues. Disordered stretches follow at residues 1-31 (MEEKPSKVSLKSSDRQGSDEESVHSDTRDLW) and 58-78 (NISKTRGWHSPGRGSLDEGYK).

In terms of assembly, component of the CatSper complex or CatSpermasome composed of the core pore-forming members CATSPER1, CATSPER2, CATSPER3 and CATSPER4 as well as auxiliary members CATSPERB, CATSPERG, CATSPERD, CATSPERE, CATSPERZ, C2CD6/CATSPERT, TMEM249, TMEM262 and EFCAB9. HSPA1 may be an additional auxiliary complex member. The core complex members CATSPER1, CATSPER2, CATSPER3 and CATSPER4 form a heterotetrameric channel. The auxiliary CATSPERB, CATSPERG, CATSPERD and CATSPERE subunits form a pavilion-like structure over the pore which stabilizes the complex through interactions with CATSPER4, CATSPER3, CATSPER1 and CATSPER2 respectively. TMEM262/CATSPERH interacts with CATSPERB, further stabilizing the complex. C2CD6/CATSPERT interacts at least with CATSPERD and is required for targeting the CatSper complex in the flagellar membrane. Interacts with EFCAB9; the interaction is direct, Ca(2+)-dependent and connects EFCAB9 with the CatSper complex. Dissociates from EFCAB9 at elevated pH.

The protein localises to the cell projection. It localises to the cilium. It is found in the flagellum membrane. Auxiliary component of the CatSper complex, a complex involved in sperm cell hyperactivation. Sperm cell hyperactivation is needed for sperm motility which is essential late in the preparation of sperm for fertilization. Required for a distribution of the CatSper complex in linear quadrilateral nanodomains along the flagellum, maximizing fertilization inside the mammalian female reproductive tract. Together with EFCAB9, associates with the CatSper channel pore and is required for the two-row structure of each single CatSper channel. This chain is Cation channel sperm-associated auxiliary subunit zeta, found in Homo sapiens (Human).